Reading from the N-terminus, the 124-residue chain is Urocortin (124 aa).

Residues 1–25 form the signal peptide; it reads MRQAGRAALLAALLLLVQLCPGSSQ. A disordered region spans residues 23-46; sequence SSQRSPEAAGVQDPSLRWSPGARN. Positions 26-82 are excised as a propeptide; the sequence is RSPEAAGVQDPSLRWSPGARNQGGGARALLLLLAERFPRRAGPGRLGLGTAGERPRR. Residue valine 122 is modified to Valine amide.

This sequence belongs to the sauvagine/corticotropin-releasing factor/urotensin I family. As to quaternary structure, interacts with CRHR1 and CRHR2 (via their N-terminal extracellular domain). Keratinocytes in epidermis and the outer and inner root sheaths of hair follicles, epithelium of sebaceous and sweat glands, erector pili muscle, cutaneous blood vessel walls, cutaneous nerves and dermal mononuclear cells. Detected in plasma cells in the lamia propria in colon mucosa (at protein level). Expressed in pituitary and adrenal glands. Detected in plasma cells in the lamia propria in colon mucosa.

It localises to the secreted. Functionally, acts in vitro to stimulate the secretion of adrenocorticotropic hormone (ACTH). Binds with high affinity to CRF receptor types 1, 2-alpha, and 2-beta. Plays a role in the establishment of normal hearing thresholds. Reduces food intake and regulates ghrelin levels in gastric body and plasma. In Homo sapiens (Human), this protein is Urocortin (UCN).